The following is a 512-amino-acid chain: Glutathione-binding protein GsiB (512 aa).

Residues 1-26 form the signal peptide; sequence MARAVHRSGLVALGIATALMASCAFA.

It belongs to the bacterial solute-binding protein 5 family. In terms of assembly, the complex is composed of two ATP-binding proteins (GsiA), two transmembrane proteins (GsiC and GsiD) and a solute-binding protein (GsiB).

The protein resides in the periplasm. Its function is as follows. Part of the ABC transporter complex GsiABCD involved in glutathione import. Binds glutathione. In Shigella boydii serotype 4 (strain Sb227), this protein is Glutathione-binding protein GsiB.